A 1400-amino-acid polypeptide reads, in one-letter code: DNA-directed RNA polymerase subunit beta' (1400 aa).

4 residues coordinate Zn(2+): Cys71, Cys73, Cys86, and Cys89. Positions 462, 464, and 466 each coordinate Mg(2+). Zn(2+) contacts are provided by Cys811, Cys885, Cys892, and Cys895.

This sequence belongs to the RNA polymerase beta' chain family. In terms of assembly, the RNAP catalytic core consists of 2 alpha, 1 beta, 1 beta' and 1 omega subunit. When a sigma factor is associated with the core the holoenzyme is formed, which can initiate transcription. It depends on Mg(2+) as a cofactor. The cofactor is Zn(2+).

The enzyme catalyses RNA(n) + a ribonucleoside 5'-triphosphate = RNA(n+1) + diphosphate. In terms of biological role, DNA-dependent RNA polymerase catalyzes the transcription of DNA into RNA using the four ribonucleoside triphosphates as substrates. This Brucella suis (strain ATCC 23445 / NCTC 10510) protein is DNA-directed RNA polymerase subunit beta'.